The primary structure comprises 546 residues: Oncoprotein-induced transcript 3 protein (546 aa).

The first 19 residues, 1-19 (MPLSLLLTCLSTTVTLVSP), serve as a signal peptide directing secretion. Residues Asn-89 and Asn-116 are each glycosylated (N-linked (GlcNAc...) asparagine). Residues 182-222 (DENECEHNNGGCSEICVNLKNSHRCACGVGRVLRSDGKTCE) enclose the EGF-like; calcium-binding domain. Disulfide bonds link Cys-186–Cys-197, Cys-193–Cys-206, and Cys-208–Cys-221. Positions 261 to 516 (TCQVPVLCKS…SRCAQGCHRR (256 aa)) constitute a ZP domain. Asn-299 carries an N-linked (GlcNAc...) asparagine glycan.

In terms of tissue distribution, liver-specific. Expressed only in the hepatocytes.

It localises to the nucleus envelope. Its function is as follows. May be involved in hepatocellular function and development. The sequence is that of Oncoprotein-induced transcript 3 protein (Oit3) from Mus musculus (Mouse).